Reading from the N-terminus, the 563-residue chain is 5-aminolevulinate synthase, mitochondrial (563 aa).

The N-terminal 18 residues, 1–18 (MESLVRQSKKLCPYIGRT), are a transit peptide targeting the mitochondrion. Residues Arg-137, Ser-251, and Lys-270 each coordinate substrate. Residues Ser-303, His-331, and Thr-373 each coordinate pyridoxal 5'-phosphate. Lys-376 is a catalytic residue. Lys-376 carries the N6-(pyridoxal phosphate)lysine modification. Residues Thr-405 and Thr-406 each contribute to the pyridoxal 5'-phosphate site. Thr-491 contributes to the substrate binding site.

The protein belongs to the class-II pyridoxal-phosphate-dependent aminotransferase family. In terms of assembly, homodimer. It depends on pyridoxal 5'-phosphate as a cofactor.

Its subcellular location is the mitochondrion matrix. It carries out the reaction succinyl-CoA + glycine + H(+) = 5-aminolevulinate + CO2 + CoA. It participates in porphyrin-containing compound metabolism; protoporphyrin-IX biosynthesis; 5-aminolevulinate from glycine: step 1/1. Its function is as follows. Catalyzes the synthesis of 5-aminolevulinate (ALA) from succinyl-CoA and glycine, the first and rate-limiting step in heme biosynthesis. This is 5-aminolevulinate synthase, mitochondrial (HEM1) from Yarrowia lipolytica (strain CLIB 122 / E 150) (Yeast).